A 299-amino-acid chain; its full sequence is Oxygen-dependent coproporphyrinogen-III oxidase (299 aa).

Ser-92 contacts substrate. Residues His-96 and His-106 each contribute to the a divalent metal cation site. His-106 serves as the catalytic Proton donor. 108–110 serves as a coordination point for substrate; sequence NVR. Residues His-145 and His-175 each coordinate a divalent metal cation. The important for dimerization stretch occupies residues 240-275; sequence YVEFNLVWDRGTLFGLQTGGRTESILMSMPPLVRWE. Position 258–260 (258–260) interacts with substrate; sequence GGR.

Belongs to the aerobic coproporphyrinogen-III oxidase family. Homodimer. A divalent metal cation serves as cofactor.

Its subcellular location is the cytoplasm. It catalyses the reaction coproporphyrinogen III + O2 + 2 H(+) = protoporphyrinogen IX + 2 CO2 + 2 H2O. Its pathway is porphyrin-containing compound metabolism; protoporphyrin-IX biosynthesis; protoporphyrinogen-IX from coproporphyrinogen-III (O2 route): step 1/1. Functionally, involved in the heme biosynthesis. Catalyzes the aerobic oxidative decarboxylation of propionate groups of rings A and B of coproporphyrinogen-III to yield the vinyl groups in protoporphyrinogen-IX. The polypeptide is Oxygen-dependent coproporphyrinogen-III oxidase (Klebsiella pneumoniae (strain 342)).